A 497-amino-acid chain; its full sequence is Malonate-semialdehyde dehydrogenase (497 aa).

NAD(+)-binding residues include phenylalanine 148, lysine 172, glutamate 175, arginine 176, and serine 225. Residue cysteine 280 is the Nucleophile of the active site. NAD(+) is bound at residue glutamate 382.

Belongs to the aldehyde dehydrogenase family.

It catalyses the reaction 3-oxopropanoate + NAD(+) + CoA + H2O = hydrogencarbonate + acetyl-CoA + NADH + H(+). Involved in the degradation of beta-alanine. Likely catalyzes the NAD(+)- and CoA-dependent oxidative decarboxylation of malonate semialdehyde (3-oxopropanoate) to acetyl-CoA. The protein is Malonate-semialdehyde dehydrogenase of Pseudomonas aeruginosa (strain ATCC 15692 / DSM 22644 / CIP 104116 / JCM 14847 / LMG 12228 / 1C / PRS 101 / PAO1).